The sequence spans 144 residues: 3-dehydroquinate dehydratase (144 aa).

Catalysis depends on Y23, which acts as the Proton acceptor. 3 residues coordinate substrate: N74, H80, and D87. H100 (proton donor) is an active-site residue. Residues 101–102 (LS) and R111 contribute to the substrate site.

This sequence belongs to the type-II 3-dehydroquinase family. Homododecamer.

The enzyme catalyses 3-dehydroquinate = 3-dehydroshikimate + H2O. It functions in the pathway metabolic intermediate biosynthesis; chorismate biosynthesis; chorismate from D-erythrose 4-phosphate and phosphoenolpyruvate: step 3/7. Functionally, catalyzes a trans-dehydration via an enolate intermediate. This Hydrogenovibrio crunogenus (strain DSM 25203 / XCL-2) (Thiomicrospira crunogena) protein is 3-dehydroquinate dehydratase.